A 663-amino-acid polypeptide reads, in one-letter code: UvrABC system protein B (663 aa).

Positions 27-414 (KNIENGVKDQ…SDNHIAEQLI (388 aa)) constitute a Helicase ATP-binding domain. Position 40-47 (40-47 (GVTGSGKT)) interacts with ATP. The Beta-hairpin signature appears at 93-116 (YYDYYQPEAYIKTTDTYIEKDSSV). Positions 432–594 (QVDDLLDEIR…IDPKSIIKEI (163 aa)) constitute a Helicase C-terminal domain. Positions 624-659 (EKEITKLEKKIKKLVEELDFEQAIILRDEMLKLKEL) constitute a UVR domain.

It belongs to the UvrB family. In terms of assembly, forms a heterotetramer with UvrA during the search for lesions. Interacts with UvrC in an incision complex.

It is found in the cytoplasm. Functionally, the UvrABC repair system catalyzes the recognition and processing of DNA lesions. A damage recognition complex composed of 2 UvrA and 2 UvrB subunits scans DNA for abnormalities. Upon binding of the UvrA(2)B(2) complex to a putative damaged site, the DNA wraps around one UvrB monomer. DNA wrap is dependent on ATP binding by UvrB and probably causes local melting of the DNA helix, facilitating insertion of UvrB beta-hairpin between the DNA strands. Then UvrB probes one DNA strand for the presence of a lesion. If a lesion is found the UvrA subunits dissociate and the UvrB-DNA preincision complex is formed. This complex is subsequently bound by UvrC and the second UvrB is released. If no lesion is found, the DNA wraps around the other UvrB subunit that will check the other stand for damage. The chain is UvrABC system protein B from Fusobacterium nucleatum subsp. nucleatum (strain ATCC 25586 / DSM 15643 / BCRC 10681 / CIP 101130 / JCM 8532 / KCTC 2640 / LMG 13131 / VPI 4355).